The following is a 202-amino-acid chain: Orotate phosphoribosyltransferase (202 aa).

5-phospho-alpha-D-ribose 1-diphosphate contacts are provided by residues Lys93 and 113-121; that span reads EDIITTGGS. Positions 117 and 145 each coordinate orotate.

This sequence belongs to the purine/pyrimidine phosphoribosyltransferase family. PyrE subfamily. As to quaternary structure, homodimer. The cofactor is Mg(2+).

It carries out the reaction orotidine 5'-phosphate + diphosphate = orotate + 5-phospho-alpha-D-ribose 1-diphosphate. Its pathway is pyrimidine metabolism; UMP biosynthesis via de novo pathway; UMP from orotate: step 1/2. Catalyzes the transfer of a ribosyl phosphate group from 5-phosphoribose 1-diphosphate to orotate, leading to the formation of orotidine monophosphate (OMP). The chain is Orotate phosphoribosyltransferase from Campylobacter jejuni subsp. jejuni serotype O:2 (strain ATCC 700819 / NCTC 11168).